The chain runs to 203 residues: MNESPEKDQRHRERMERKKAVVDEKIAQARDERGVLLVHSGNGKGKSSSAFGMVARALGHGMKVGVVQFIKGAASTGEEAFFRRFPEEVSYHVMGEGFTWETQDRQRDIAKAEAAWKVAAQLLADPDVGLVVLDELNIALKHGYLELDRVLADIQARPAMQHVVVTGRGAQPGMIEAADTVTEMSLVKHAFKAGIKAQKGVEF.

The interval 1-21 is disordered; the sequence is MNESPEKDQRHRERMERKKAV. Residue 41–47 participates in ATP binding; the sequence is GNGKGKS.

It belongs to the Cob(I)alamin adenosyltransferase family. Monomer. Requires Mn(2+) as cofactor.

It is found in the cytoplasm. The enzyme catalyses 2 cob(II)yrinate a,c diamide + reduced [electron-transfer flavoprotein] + 2 ATP = 2 adenosylcob(III)yrinate a,c-diamide + 2 triphosphate + oxidized [electron-transfer flavoprotein] + 3 H(+). It catalyses the reaction 2 cob(II)alamin + reduced [electron-transfer flavoprotein] + 2 ATP = 2 adenosylcob(III)alamin + 2 triphosphate + oxidized [electron-transfer flavoprotein] + 3 H(+). The protein operates within cofactor biosynthesis; adenosylcobalamin biosynthesis; adenosylcobalamin from cob(II)yrinate a,c-diamide: step 2/7. Functionally, required for both de novo synthesis of the corrin ring for the assimilation of exogenous corrinoids. Participates in the adenosylation of a variety of incomplete and complete corrinoids. The sequence is that of Corrinoid adenosyltransferase (cobO) from Pseudomonas aeruginosa (strain ATCC 15692 / DSM 22644 / CIP 104116 / JCM 14847 / LMG 12228 / 1C / PRS 101 / PAO1).